Reading from the N-terminus, the 372-residue chain is uncharacterized protein (372 aa).

A helical transmembrane segment spans residues Gly224 to Ile244. Ser329 is modified (phosphoserine).

The protein localises to the vacuole membrane. This is an uncharacterized protein from Saccharomyces cerevisiae (strain ATCC 204508 / S288c) (Baker's yeast).